We begin with the raw amino-acid sequence, 437 residues long: GTPase Era, mitochondrial (437 aa).

A mitochondrion-targeting transit peptide spans 1–43; it reads MAASSWRGAVLLRTVSGLWQAGPDAAREWMTRLPSLLGFQQRC. Residues 112-330 enclose the Era-type G domain; it reads RVLRVVLLGA…QYLLAQARPG (219 aa). The tract at residues 120–127 is G1; sequence GAPNAGKS. GTP is bound at residue 120–127; that stretch reads GAPNAGKS. The segment at 146 to 150 is G2; it reads HTTRS. Residues 167-170 form a G3 region; the sequence is DTPG. 167-171 provides a ligand contact to GTP; it reads DTPGL. Ser-173 carries the phosphoserine modification. Position 236 to 239 (236 to 239) interacts with GTP; that stretch reads NKVD. The tract at residues 236-239 is G4; that stretch reads NKVD. The disordered stretch occupies residues 264–296; the sequence is LKTKQALRSRPDTHCPSPAAQGPNPQPVRDPQQ. A G5 region spans residues 308–310; that stretch reads LSA. Residues 360-437 form the KH type-2 domain; sequence LPEEVPYNVQ…QLRLSVKLLK (78 aa).

The protein belongs to the TRAFAC class TrmE-Era-EngA-EngB-Septin-like GTPase superfamily. Era GTPase family.

It is found in the mitochondrion matrix. It localises to the mitochondrion inner membrane. Its function is as follows. Probable GTPase that plays a role in the mitochondrial ribosomal small subunit assembly. Specifically binds the 12S mitochondrial rRNA (12S mt-rRNA) to a 33 nucleotide section delineating the 3' terminal stem-loop region. May act as a chaperone that protects the 12S mt-rRNA on the 28S mitoribosomal subunit during ribosomal small subunit assembly. The chain is GTPase Era, mitochondrial (ERAL1) from Bos taurus (Bovine).